The following is a 692-amino-acid chain: Mitogen-activated protein kinase kinase kinase 7-interacting protein 3 homolog (692 aa).

The region spanning 8–51 is the CUE domain; it reads LDIQVLNDLQQRFPEIPRDVVSQCMLQNNSNLDACYRALTQESC. Disordered regions lie at residues 138 to 159, 206 to 333, and 349 to 427; these read NDQN…GVGT, YGTP…PYGP, and SQQR…VVMS. Polar residues-rich tracts occupy residues 215 to 230, 249 to 298, and 349 to 387; these read PSQN…NTAW, QSFQ…QTSH, and SQQR…SGSP. A compositionally biased stretch (low complexity) spans 409 to 422; that stretch reads SQPPTTTGSPTPSS. The stretch at 496-580 forms a coiled coil; sequence ALLLHQRARM…QKEIDLLQSR (85 aa). Residues 598–662 form a disordered region; the sequence is SPGPAVPPNT…SPRPGRDEDF (65 aa). Positions 608–620 are enriched in basic and acidic residues; the sequence is CKKESSETTSGER. The RanBP2-type zinc-finger motif lies at 662–692; it reads FEGSPWNCNSCTFLNHPALNRCEQCEMPRFT.

In terms of biological role, may play a role in signaling pathway. The sequence is that of Mitogen-activated protein kinase kinase kinase 7-interacting protein 3 homolog (map3k7ip3) from Xenopus laevis (African clawed frog).